Here is a 552-residue protein sequence, read N- to C-terminus: Probable protein kinase UbiB (552 aa).

Residues 22–42 form a helical membrane-spanning segment; the sequence is LLPANLPLAATLLLLPFKLFP. A Protein kinase domain is found at 118-498; it reads SFNIEPLASA…QQLARQRNRR (381 aa). Residues 124–132 and K146 contribute to the ATP site; that span reads LASASVAQV. The Proton acceptor role is filled by D281. Transmembrane regions (helical) follow at residues 501-521 and 530-550; these read ITLL…GEGI and FGDI…AWLL.

Belongs to the ABC1 family. UbiB subfamily.

The protein localises to the cell inner membrane. Its pathway is cofactor biosynthesis; ubiquinone biosynthesis [regulation]. Is probably a protein kinase regulator of UbiI activity which is involved in aerobic coenzyme Q (ubiquinone) biosynthesis. The polypeptide is Probable protein kinase UbiB (Cellvibrio japonicus (strain Ueda107) (Pseudomonas fluorescens subsp. cellulosa)).